Here is a 350-residue protein sequence, read N- to C-terminus: C5a anaphylatoxin chemotactic receptor 1 (350 aa).

Over 1-36 the chain is Extracellular; the sequence is APMENSTYDYTNYDSLGTLDPSTPVDNTVRRLRPTT. The N-linked (GlcNAc...) asparagine glycan is linked to asparagine 5. Sulfotyrosine is present on residues tyrosine 10 and tyrosine 13. The chain crosses the membrane as a helical span at residues 37–63; that stretch reads IVALVIYMAVFLVGVPGNALVVWVTAL. Over 64-68 the chain is Cytoplasmic; the sequence is EAKRT. Residues 69–92 traverse the membrane as a helical segment; that stretch reads VNAIWFLNLAVADLLSCLALPILF. The Extracellular portion of the chain corresponds to 93–109; it reads VSIIQEGHWPFGRAACS. An intrachain disulfide couples cysteine 108 to cysteine 187. A helical transmembrane segment spans residues 110-131; sequence VLPSLILLNMYASILLLATISA. The Cytoplasmic segment spans residues 132–152; that stretch reads DRFLLVFNPIWCQNTRGAGLA. The helical transmembrane segment at 153–173 threads the bilayer; the sequence is WLACCVAWGLALLLTIPSFLY. Residues 174-200 lie on the Extracellular side of the membrane; that stretch reads RKVLQDDYPPKTTCGVDYGHEGVRAER. A helical membrane pass occupies residues 201–226; sequence AVAIVRLVVGFLLPLFTLSVCYTFLL. Residues 227 to 242 are Cytoplasmic-facing; sequence LRTWSRNGTRSTKTLK. Residues 243–265 traverse the membrane as a helical segment; it reads VVVAVVVSFFIFWLPYQVMGMIL. Over 266 to 282 the chain is Extracellular; sequence ALLHPSSATFRWAIRLD. A helical transmembrane segment spans residues 283–303; the sequence is PLCIALAYVNCCINPIIYVVA. Topologically, residues 304 to 350 are cytoplasmic; that stretch reads GKGFQGQLRKSLPSLLRNVLAEESVIQGSKSFSRSTVDTVADKCQAV. A phosphoserine mark is found at serine 314, serine 317, serine 327, serine 332, serine 334, and serine 338.

The protein belongs to the G-protein coupled receptor 1 family. In terms of assembly, homodimer. May also form higher-order oligomers. Interacts (when phosphorylated) with ARRB1 and ARRB2; the interaction is associated with internalization of C5aR. Sulfation plays a critical role in the association of C5aR with C5a, but no significant role in the ability of the receptor to transduce a signal and mobilize calcium in response to a small peptide agonist. Post-translationally, phosphorylated on serine residues in response to C5a binding, resulting in internalization of the receptor and short-term desensitization to C5a.

Its subcellular location is the cell membrane. The protein localises to the cytoplasmic vesicle. Functionally, receptor for the chemotactic and inflammatory peptide anaphylatoxin C5a. The ligand interacts with at least two sites on the receptor: a high-affinity site on the extracellular N-terminus, and a second site in the transmembrane region which activates downstream signaling events. Receptor activation stimulates chemotaxis, granule enzyme release, intracellular calcium release and superoxide anion production. The sequence is that of C5a anaphylatoxin chemotactic receptor 1 (C5AR1) from Oryctolagus cuniculus (Rabbit).